A 369-amino-acid polypeptide reads, in one-letter code: Flagellar P-ring protein (369 aa).

The first 23 residues, 1–23 (MRIASFFTVLLTLLTLNITPASA), serve as a signal peptide directing secretion.

It belongs to the FlgI family. The basal body constitutes a major portion of the flagellar organelle and consists of four rings (L,P,S, and M) mounted on a central rod.

The protein localises to the periplasm. Its subcellular location is the bacterial flagellum basal body. Assembles around the rod to form the L-ring and probably protects the motor/basal body from shearing forces during rotation. This is Flagellar P-ring protein from Pectobacterium atrosepticum (strain SCRI 1043 / ATCC BAA-672) (Erwinia carotovora subsp. atroseptica).